We begin with the raw amino-acid sequence, 424 residues long: MKFDVIIIGGGLAGLVCGIRLAEQGKYCAIVSAGQNALHFSSGSLDLLAKLPNGQAVSQPLSALETLAELAPEHPYSKMGQTGQVGELAQQAESLLSRCGLSLVGSAAKNHLRLTPLGNCRPTWLSPADIPVAPLEGPLPWQKVAVIGIEGFLDFQPQMVASALQEQGVEVTSDYLHLPALDRLRDNPSEFRAVNIARVLDLPENLQPLADELARLSSTAEMILLPACIGLDESAPLEALRAAVGKPIQLLPTLPPSLLGMRLHQALRHRFQQLGGIVMPGDAVLRAELVGNRITGLYSRNHGDIPLRAAQMVLASGSFFSNGLVATFEHVYEPILDLDILSLPNRADWSNSNMFAPQPYLQFGVNTDNRLRALRGGVALDNLHVIGAVLGGYDPLQQGCGAGVSLTSALFVAEQIVSAMEVTL.

This sequence belongs to the anaerobic G-3-P dehydrogenase subunit B family. Composed of a catalytic GlpA/B dimer and of membrane bound GlpC. The cofactor is FMN.

It carries out the reaction a quinone + sn-glycerol 3-phosphate = dihydroxyacetone phosphate + a quinol. Its pathway is polyol metabolism; glycerol degradation via glycerol kinase pathway; glycerone phosphate from sn-glycerol 3-phosphate (anaerobic route): step 1/1. Conversion of glycerol 3-phosphate to dihydroxyacetone. Uses fumarate or nitrate as electron acceptor. This chain is Anaerobic glycerol-3-phosphate dehydrogenase subunit B, found in Yersinia enterocolitica serotype O:8 / biotype 1B (strain NCTC 13174 / 8081).